The following is a 414-amino-acid chain: MNEVLAKGKKAKEIARELVLKSTEQKNEALSAIADQLILETAYILEENKKDIEEGKAKGFSDSLLDRLMLNEQRIVDMTEGIKQLIELRDPVGECVSAWERPNGLSIQEMRVPLGVVGMIYEARPNVTVDAATICLKTGNAVILRGSSSAIHSNKAIVAVIHRALKQTSLPQESVQLIEDTTRDSAKQLFTMNDYLDVLIPRGGKQLIDTVVREASVPVLETGAGNCHVFIDETADKQMAFDIINAKTQRPSVCNAIETIVLHEKWAEQYGSELFSSLKKRGVELRGDQKALAMDSTIVLASEEDWGTEFLSLTPAVKLVSSIEEAIHHINTYGSMHSEAIISENEEKVSKFFVSVDAAALYHNASTRFTDGSEFGSGAEIGISTQKLHVRGPMGLPALTSTKYVIRGNGQIRK.

Belongs to the gamma-glutamyl phosphate reductase family.

Its subcellular location is the cytoplasm. It catalyses the reaction L-glutamate 5-semialdehyde + phosphate + NADP(+) = L-glutamyl 5-phosphate + NADPH + H(+). The protein operates within amino-acid biosynthesis; L-proline biosynthesis; L-glutamate 5-semialdehyde from L-glutamate: step 2/2. Its function is as follows. Catalyzes the NADPH-dependent reduction of L-glutamate 5-phosphate into L-glutamate 5-semialdehyde and phosphate. The product spontaneously undergoes cyclization to form 1-pyrroline-5-carboxylate. The chain is Gamma-glutamyl phosphate reductase from Bacillus anthracis (strain A0248).